The chain runs to 116 residues: U11-theraphotoxin-Hhn1b (116 aa).

Positions 1 to 21 (MNTVRVAFLLVFVLAVSLGQA) are cleaved as a signal peptide. Residues 22–74 (DKDENRMEMQEKTEQGKSYLDFAENLLLQKLEELEAKLLEEDSEESRNSRQKR) constitute a propeptide that is removed on maturation. The disordered stretch occupies residues 61-83 (EEDSEESRNSRQKRCIGEGVPCD). 3 disulfides stabilise this stretch: C75–C90, C82–C95, and C89–C110.

This sequence belongs to the neurotoxin 14 (magi-1) family. 01 (HNTX-16) subfamily. In terms of tissue distribution, expressed by the venom gland.

The protein localises to the secreted. Probable ion channel inhibitor. The polypeptide is U11-theraphotoxin-Hhn1b (Cyriopagopus hainanus (Chinese bird spider)).